The chain runs to 198 residues: Na(+)-translocating NADH-quinone reductase subunit E (198 aa).

The next 6 membrane-spanning stretches (helical) occupy residues 11-31, 35-55, 77-97, 110-130, 140-160, and 176-196; these read SVFI…FLAV, VSTA…SVPV, FLNF…LEMF, GIFL…SFMV, VVYG…LAGL, and LGIT…FSGI.

The protein belongs to the NqrDE/RnfAE family. In terms of assembly, composed of six subunits; NqrA, NqrB, NqrC, NqrD, NqrE and NqrF.

The protein localises to the cell inner membrane. It carries out the reaction a ubiquinone + n Na(+)(in) + NADH + H(+) = a ubiquinol + n Na(+)(out) + NAD(+). Its function is as follows. NQR complex catalyzes the reduction of ubiquinone-1 to ubiquinol by two successive reactions, coupled with the transport of Na(+) ions from the cytoplasm to the periplasm. NqrA to NqrE are probably involved in the second step, the conversion of ubisemiquinone to ubiquinol. The polypeptide is Na(+)-translocating NADH-quinone reductase subunit E (Mannheimia succiniciproducens (strain KCTC 0769BP / MBEL55E)).